Consider the following 83-residue polypeptide: Cytochrome b559 subunit alpha (83 aa).

Residues 21 to 35 form a helical membrane-spanning segment; the sequence is VIHSITIPSLFIAGW. Residue H23 coordinates heme.

This sequence belongs to the PsbE/PsbF family. In terms of assembly, heterodimer of an alpha subunit and a beta subunit. PSII is composed of 1 copy each of membrane proteins PsbA, PsbB, PsbC, PsbD, PsbE, PsbF, PsbH, PsbI, PsbJ, PsbK, PsbL, PsbM, PsbT, PsbX, PsbY, PsbZ, Psb30/Ycf12, at least 3 peripheral proteins of the oxygen-evolving complex and a large number of cofactors. It forms dimeric complexes. Heme b is required as a cofactor.

The protein localises to the plastid. Its subcellular location is the chloroplast thylakoid membrane. In terms of biological role, this b-type cytochrome is tightly associated with the reaction center of photosystem II (PSII). PSII is a light-driven water:plastoquinone oxidoreductase that uses light energy to abstract electrons from H(2)O, generating O(2) and a proton gradient subsequently used for ATP formation. It consists of a core antenna complex that captures photons, and an electron transfer chain that converts photonic excitation into a charge separation. The polypeptide is Cytochrome b559 subunit alpha (Physcomitrium patens (Spreading-leaved earth moss)).